The following is a 250-amino-acid chain: Peptidyl-tRNA hydrolase (250 aa).

Tyr-14 is a binding site for tRNA. Residue His-19 is the Proton acceptor of the active site. Residues Phe-64, Asn-66, and Asn-112 each coordinate tRNA. The interval 192–250 (MGDGNQRPGGVKTDPAQLEKAPPKAQSHIRQARQNQKKPNIPESGPMAEMLKKLLGKKD) is disordered. Residues 219 to 229 (HIRQARQNQKK) show a composition bias toward polar residues. Positions 241-250 (MLKKLLGKKD) are enriched in basic and acidic residues.

It belongs to the PTH family. In terms of assembly, monomer.

The protein localises to the cytoplasm. The catalysed reaction is an N-acyl-L-alpha-aminoacyl-tRNA + H2O = an N-acyl-L-amino acid + a tRNA + H(+). In terms of biological role, hydrolyzes ribosome-free peptidyl-tRNAs (with 1 or more amino acids incorporated), which drop off the ribosome during protein synthesis, or as a result of ribosome stalling. Functionally, catalyzes the release of premature peptidyl moieties from peptidyl-tRNA molecules trapped in stalled 50S ribosomal subunits, and thus maintains levels of free tRNAs and 50S ribosomes. This chain is Peptidyl-tRNA hydrolase, found in Brucella abortus (strain 2308).